The chain runs to 227 residues: UPF0173 metal-dependent hydrolase Bsph_4138 (227 aa).

Belongs to the UPF0173 family.

The polypeptide is UPF0173 metal-dependent hydrolase Bsph_4138 (Lysinibacillus sphaericus (strain C3-41)).